We begin with the raw amino-acid sequence, 385 residues long: 8-amino-7-oxononanoate synthase (385 aa).

Residue R27 coordinates substrate. 105 to 106 (GY) is a pyridoxal 5'-phosphate binding site. Position 130 (H130) interacts with substrate. Pyridoxal 5'-phosphate is bound by residues S176, 201 to 204 (DEAH), and 232 to 235 (TMSK). K235 carries the N6-(pyridoxal phosphate)lysine modification. T345 is a binding site for substrate.

This sequence belongs to the class-II pyridoxal-phosphate-dependent aminotransferase family. BioF subfamily. As to quaternary structure, homodimer. The cofactor is pyridoxal 5'-phosphate.

The enzyme catalyses 6-carboxyhexanoyl-[ACP] + L-alanine + H(+) = (8S)-8-amino-7-oxononanoate + holo-[ACP] + CO2. It participates in cofactor biosynthesis; biotin biosynthesis. Catalyzes the decarboxylative condensation of pimeloyl-[acyl-carrier protein] and L-alanine to produce 8-amino-7-oxononanoate (AON), [acyl-carrier protein], and carbon dioxide. This Mycobacterium leprae (strain Br4923) protein is 8-amino-7-oxononanoate synthase.